We begin with the raw amino-acid sequence, 735 residues long: Nuclear intron maturase 2, mitochondrial (735 aa).

The N-terminal 12 residues, 1-12 (MRRSFSVLGPYK), are a transit peptide targeting the mitochondrion. The 300-residue stretch at 161 to 460 (RDKTDYESLS…KGIMFLDHVL (300 aa)) folds into the Reverse transcriptase domain. The intron maturase type-2 stretch occupies residues 485-653 (GTLLSVTASL…KFLIEYLTLD (169 aa)). The tract at residues 707-735 (SSTYNRDNDDQKNKEEDEDSEDGLRIARM) is disordered. The span at 712-721 (RDNDDQKNKE) shows a compositional bias: basic and acidic residues.

The protein belongs to the plant nuclear intron maturase (nMat) family. As to quaternary structure, associated to a large ribonucleoprotein complex in mitochondria containing group-II intron RNAs.

The protein localises to the mitochondrion. Nuclear-encoded maturase required for splicing of group-II introns in mitochondria. Involved in the splicing of mitochondrial COX2, NAD1 and NAD7 transcripts. Necessary for mitochondrial biogenesis during early developmental stages. This is Nuclear intron maturase 2, mitochondrial from Arabidopsis thaliana (Mouse-ear cress).